The chain runs to 333 residues: Foldase protein PrsA (333 aa).

Residues 1–19 (MKKRHLLIAGLACMTILGA) form the signal peptide. Residue C20 is the site of N-palmitoyl cysteine attachment. C20 is lipidated: S-diacylglycerol cysteine. Residues 155 to 245 (LIEVEASHIL…YGYHIILVTD (91 aa)) enclose the PpiC domain. Residues 291-333 (GLFDLPDAPPVEDTPEIDGEDASDEAEDQAEDADENAEEEDES) are disordered. Positions 303–333 (DTPEIDGEDASDEAEDQAEDADENAEEEDES) are enriched in acidic residues.

Belongs to the PrsA family.

It is found in the cell membrane. It carries out the reaction [protein]-peptidylproline (omega=180) = [protein]-peptidylproline (omega=0). In terms of biological role, plays a major role in protein secretion by helping the post-translocational extracellular folding of several secreted proteins. This is Foldase protein PrsA from Halalkalibacterium halodurans (strain ATCC BAA-125 / DSM 18197 / FERM 7344 / JCM 9153 / C-125) (Bacillus halodurans).